We begin with the raw amino-acid sequence, 141 residues long: Hemoglobin subunit alpha-D (141 aa).

Positions 1-141 constitute a Globin domain; the sequence is MLTAEDKKLI…VSAVLAEKYR (141 aa). Heme b contacts are provided by His58 and His87.

The protein belongs to the globin family. As to quaternary structure, heterotetramer of two alpha-D chains and two beta chains. In terms of tissue distribution, red blood cells.

Its function is as follows. Involved in oxygen transport from the lung to the various peripheral tissues. The protein is Hemoglobin subunit alpha-D (HBAD) of Meleagris gallopavo (Wild turkey).